Here is a 550-residue protein sequence, read N- to C-terminus: 4-coumarate--CoA ligase-like 8 (550 aa).

6 residues coordinate ATP: serine 207, serine 208, glycine 209, threonine 210, threonine 211, and lysine 215. Phenylalanine 253 provides a ligand contact to (E)-4-coumaroyl-AMP. Arginine 274 serves as a coordination point for CoA. Positions 276-347 are SBD1; the sequence is DLGEMMAAVE…KKYPTVDVYQ (72 aa). Positions 325, 347, 348, and 352 each coordinate (E)-4-coumaroyl-AMP. Positions 347, 348, 352, 430, and 445 each coordinate ATP. The SBD2 stretch occupies residues 348 to 412; sequence GYALTESNGA…LKGPSIAKGY (65 aa). Lysine 447 and lysine 451 together coordinate (E)-4-coumaroyl-AMP. CoA is bound by residues lysine 453 and glycine 454. Lysine 536 provides a ligand contact to ATP. Positions 548 to 550 match the Microbody targeting signal motif; sequence SKI.

This sequence belongs to the ATP-dependent AMP-binding enzyme family. The cofactor is Mg(2+).

It localises to the peroxisome. It catalyses the reaction (E)-4-coumarate + ATP + CoA = (E)-4-coumaroyl-CoA + AMP + diphosphate. The enzyme catalyses (E)-4-coumarate + ATP + H(+) = (E)-4-coumaroyl-AMP + diphosphate. It carries out the reaction (E)-4-coumaroyl-AMP + CoA = (E)-4-coumaroyl-CoA + AMP + H(+). Carboxylate--CoA ligase that may use 4-coumarate as substrate. Follows a two-step reaction mechanism, wherein the carboxylate substrate first undergoes adenylation by ATP, followed by a thioesterification in the presence of CoA to yield the final CoA thioester. This is 4-coumarate--CoA ligase-like 8 from Arabidopsis thaliana (Mouse-ear cress).